A 131-amino-acid chain; its full sequence is Translation initiation factor 5A (131 aa).

The residue at position 37 (lysine 37) is a Hypusine.

It belongs to the eIF-5A family.

Its subcellular location is the cytoplasm. Functions by promoting the formation of the first peptide bond. The polypeptide is Translation initiation factor 5A (eIF5A) (Methanococcus vannielii (strain ATCC 35089 / DSM 1224 / JCM 13029 / OCM 148 / SB)).